Reading from the N-terminus, the 434-residue chain is Putative nuclease OPG089 (434 aa).

Belongs to the XPG/RAD2 endonuclease family. FEN1 subfamily. It depends on Mg(2+) as a cofactor.

Its subcellular location is the virion. In terms of biological role, putative nuclease that seems to be required for double-strand break repair, homologous recombination, and production of full-length viral genomic DNA. In Monkeypox virus, this protein is Putative nuclease OPG089 (OPG089).